A 528-amino-acid chain; its full sequence is Extracellular serine/threonine protein CG31145 (528 aa).

The Cytoplasmic segment spans residues 1–12 (MAVLRTMKLKER). A propeptide spanning residues 1-76 (MAVLRTMKLK…LHEFKRKFLQ (76 aa)) is cleaved from the precursor. The chain crosses the membrane as a helical span at residues 13-33 (LVISLGATLVLLTLLLIVDVQ). The Lumenal segment spans residues 34-528 (MDFGVANRHL…VDGSETDVSS (495 aa)). A disordered region spans residues 77 to 130 (KSNASGSKEASTQAGASQSGGATSGQDAAAGASGGAAGPGTSRSTSTRKPTPHD). Asn-79 carries an N-linked (GlcNAc...) asparagine glycan. Low complexity predominate over residues 86–107 (ASTQAGASQSGGATSGQDAAAG). Residue Asn-173 is glycosylated (N-linked (GlcNAc...) asparagine). Residues Gln-220, Lys-236, and Glu-257 each coordinate ATP. Glu-257 serves as a coordination point for Mn(2+). Asn-286 carries an N-linked (GlcNAc...) asparagine glycan. Disulfide bonds link Cys-312-Cys-328 and Cys-317-Cys-321. Residue 339-342 (AAFL) participates in ATP binding. 2 disulfide bridges follow: Cys-376–Cys-450 and Cys-451–Cys-510. Residue Asp-408 is part of the active site. Glu-413 lines the ATP pocket. A glycan (N-linked (GlcNAc...) asparagine) is linked at Asn-420. An ATP-binding site is contributed by Asp-428. Asp-428 contacts Mn(2+).

Belongs to the FAM20 family. The cofactor is Mn(2+). As to expression, in embryos, prominently expressed in midline glia, salivary gland, intestine and dorsal vessel (heart). Not associated with biomineralization.

It is found in the golgi apparatus membrane. It localises to the secreted. The catalysed reaction is L-seryl-[protein] + ATP = O-phospho-L-seryl-[protein] + ADP + H(+). The enzyme catalyses L-threonyl-[protein] + ATP = O-phospho-L-threonyl-[protein] + ADP + H(+). Functionally, golgi serine/threonine protein kinase that phosphorylates secretory pathway proteins within Ser-x-Glu/pSer motifs. This is Extracellular serine/threonine protein CG31145 from Drosophila melanogaster (Fruit fly).